Reading from the N-terminus, the 272-residue chain is Sulfate transporter CysZ (272 aa).

The next 4 helical transmembrane spans lie at 29-49, 66-86, 148-168, and 219-239; these read FVIM…WLFI, WLSF…LLLF, IIAL…VPVL, and FVPV…TLMW.

The protein belongs to the CysZ family.

It localises to the cell inner membrane. Functionally, high affinity, high specificity proton-dependent sulfate transporter, which mediates sulfate uptake. Provides the sulfur source for the cysteine synthesis pathway. The chain is Sulfate transporter CysZ from Haemophilus influenzae (strain ATCC 51907 / DSM 11121 / KW20 / Rd).